The following is a 709-amino-acid chain: Dibasic-processing endoprotease (709 aa).

Positions 1–22 (MHPALLCGPILAIFLQFLVSSC) are cleaved as a signal peptide. 2 consecutive propeptides follow at residues 23-82 (SPLE…IRKR) and 83-102 (GIDA…RYKR). The Lumenal portion of the chain corresponds to 103 to 668 (DASESDELLN…QPVLEPSYRE (566 aa)). The 313-residue stretch at 128-440 (QWHIFNSNNP…FGKLDASKFV (313 aa)) folds into the Peptidase S8 domain. A glycan (N-linked (GlcNAc...) asparagine) is linked at Asn-155. Active-site charge relay system residues include Asp-162 and His-200. 2 disulfides stabilise this stretch: Cys-216–Cys-363 and Cys-308–Cys-338. Residue Ser-371 is the Charge relay system of the active site. Residues 449-588 (VNPQTWLIAP…QLALWGESEN (140 aa)) form the P/Homo B domain. N-linked (GlcNAc...) asparagine glycosylation is found at Asn-463, Asn-471, and Asn-620. A helical membrane pass occupies residues 669–693 (IVAFITFFLLFAFIFVAVIWTWISA). The Cytoplasmic segment spans residues 694-709 (FWKAKAPPPLSQQEIA).

Belongs to the peptidase S8 family. Furin subfamily. Requires Ca(2+) as cofactor. N-glycosylated.

It is found in the golgi apparatus. The protein resides in the trans-Golgi network membrane. Functionally, membrane-bound, subtilisin-like serine protease that processes the P-factor precursor and other precursor proteins. Essential for cell viability. Cleaves substrate on the C-terminal side of dibasic residues. The protein is Dibasic-processing endoprotease (krp1) of Schizosaccharomyces pombe (strain 972 / ATCC 24843) (Fission yeast).